Reading from the N-terminus, the 235-residue chain is Probable transcriptional regulatory protein CJJ81176_1187 (235 aa).

It belongs to the TACO1 family.

The protein resides in the cytoplasm. The polypeptide is Probable transcriptional regulatory protein CJJ81176_1187 (Campylobacter jejuni subsp. jejuni serotype O:23/36 (strain 81-176)).